The following is a 295-amino-acid chain: 4-hydroxy-tetrahydrodipicolinate synthase (295 aa).

Pyruvate is bound at residue Thr46. Tyr135 (proton donor/acceptor) is an active-site residue. The active-site Schiff-base intermediate with substrate is the Lys164. Ile205 is a pyruvate binding site.

This sequence belongs to the DapA family. As to quaternary structure, homotetramer; dimer of dimers.

It is found in the cytoplasm. It catalyses the reaction L-aspartate 4-semialdehyde + pyruvate = (2S,4S)-4-hydroxy-2,3,4,5-tetrahydrodipicolinate + H2O + H(+). It functions in the pathway amino-acid biosynthesis; L-lysine biosynthesis via DAP pathway; (S)-tetrahydrodipicolinate from L-aspartate: step 3/4. In terms of biological role, catalyzes the condensation of (S)-aspartate-beta-semialdehyde [(S)-ASA] and pyruvate to 4-hydroxy-tetrahydrodipicolinate (HTPA). The sequence is that of 4-hydroxy-tetrahydrodipicolinate synthase from Wolinella succinogenes (strain ATCC 29543 / DSM 1740 / CCUG 13145 / JCM 31913 / LMG 7466 / NCTC 11488 / FDC 602W) (Vibrio succinogenes).